We begin with the raw amino-acid sequence, 68 residues long: Riparin-1.6 (68 aa).

The first 15 residues, 1 to 15 (MKIIVFLAVLMLVSA), serve as a signal peptide directing secretion. The propeptide occupies 16 to 41 (QVCLVSAAEMEHSSDNELSSRDLVKR). A disulfide bridge connects residues cysteine 47 and cysteine 53. Residue cysteine 53 is modified to Cysteine amide. A propeptide spanning residues 57 to 68 (DIESSEGANGGE) is cleaved from the precursor.

Expressed by the skin glands.

It localises to the secreted. The chain is Riparin-1.6 from Crinia riparia (Streambank froglet).